Consider the following 555-residue polypeptide: Genome polyprotein (555 aa).

Over 1 to 7 the chain is Extracellular; the sequence is KHAQRIE. A helical membrane pass occupies residues 8–28; the sequence is TWILRHPGFTIMAAILAYTIG. Over 29-34 the chain is Cytoplasmic; it reads TTHFQR. A helical transmembrane segment spans residues 35–49; that stretch reads ALIFILLTAVAPSMT. The Extracellular portion of the chain corresponds to 50-494; the sequence is MRCIGISNRD…LHQVFGAIYG (445 aa). Disulfide bonds link cysteine 52–cysteine 79, cysteine 109–cysteine 170, cysteine 123–cysteine 154, and cysteine 141–cysteine 165. N-linked (GlcNAc...) asparagine; by host glycosylation is present at asparagine 116. Residues 147 to 160 are fusion peptide; that stretch reads DRGWGNGCGLFGKG. Asparagine 202 carries N-linked (GlcNAc...) asparagine; by host glycosylation. Intrachain disulfides connect cysteine 234–cysteine 334 and cysteine 351–cysteine 382. Residues 495-515 traverse the membrane as a helical segment; that stretch reads AAFSGVSWTMKILIGVIITWI. Residues 516–521 lie on the Cytoplasmic side of the membrane; that stretch reads GMNSRS. A helical transmembrane segment spans residues 522-542; the sequence is TSLSVSLVLVGIVTLYLEVMV. The Extracellular portion of the chain corresponds to 543 to 555; it reads QADSGCVVSWKNK.

Homodimer; in the endoplasmic reticulum and Golgi. Interacts with protein prM. Interacts with non-structural protein 1. As to quaternary structure, homodimer; Homohexamer when secreted. Interacts with envelope protein E. Post-translationally, N-glycosylated. N-glycosylated. The excreted form is glycosylated and this is required for efficient secretion of the protein from infected cells. In terms of processing, specific enzymatic cleavages in vivo yield mature proteins. Cleavages in the lumen of endoplasmic reticulum are performed by host signal peptidase, wereas cleavages in the cytoplasmic side are performed by serine protease NS3. Signal cleavage at the 2K-4B site requires a prior NS3 protease-mediated cleavage at the 4A-2K site.

The protein resides in the virion membrane. It is found in the host endoplasmic reticulum membrane. Its subcellular location is the secreted. May play a role in virus budding. Exerts cytotoxic effects by activating a mitochondrial apoptotic pathway through M ectodomain. May display a viroporin activity. Its function is as follows. Binds to host cell surface receptor and mediates fusion between viral and cellular membranes. Envelope protein is synthesized in the endoplasmic reticulum in the form of heterodimer with protein prM. They play a role in virion budding in the ER, and the newly formed immature particle is covered with 60 spikes composed of heterodimer between precursor prM and envelope protein E. The virion is transported to the Golgi apparatus where the low pH causes dissociation of PrM-E heterodimers and formation of E homodimers. prM-E cleavage is inefficient, and many virions are only partially matured. These uncleaved prM would play a role in immune evasion. Functionally, involved in immune evasion, pathogenesis and viral replication. Once cleaved off the polyprotein, is targeted to three destinations: the viral replication cycle, the plasma membrane and the extracellular compartment. Essential for viral replication. Required for formation of the replication complex and recruitment of other non-structural proteins to the ER-derived membrane structures. Excreted as a hexameric lipoparticle that plays a role against host immune response. Antagonizing the complement function. Binds to the host macrophages and dendritic cells. Inhibits signal transduction originating from Toll-like receptor 3 (TLR3). In terms of biological role, disrupts the host endothelial glycocalyx layer of host pulmonary microvascular endothelial cells, inducing degradation of sialic acid and shedding of heparan sulfate proteoglycans. NS1 induces expression of sialidases, heparanase, and activates cathepsin L, which activates heparanase via enzymatic cleavage. These effects are probably linked to the endothelial hyperpermeability observed in severe dengue disease. This is Genome polyprotein from Dengue virus type 2 (strain Thailand/TH-36/1958) (DENV-2).